We begin with the raw amino-acid sequence, 88 residues long: Small ribosomal subunit protein uS19 (88 aa).

Belongs to the universal ribosomal protein uS19 family.

Its function is as follows. Protein S19 forms a complex with S13 that binds strongly to the 16S ribosomal RNA. The polypeptide is Small ribosomal subunit protein uS19 (rpsS) (Chlamydia pneumoniae (Chlamydophila pneumoniae)).